The sequence spans 294 residues: Ethanolamine ammonia-lyase small subunit (294 aa).

Residues valine 207 and glutamate 228 each coordinate adenosylcob(III)alamin.

This sequence belongs to the EutC family. The basic unit is a heterodimer which dimerizes to form tetramers. The heterotetramers trimerize; 6 large subunits form a core ring with 6 small subunits projecting outwards. The cofactor is adenosylcob(III)alamin.

It localises to the bacterial microcompartment. The catalysed reaction is ethanolamine = acetaldehyde + NH4(+). The protein operates within amine and polyamine degradation; ethanolamine degradation. Functionally, catalyzes the deamination of various vicinal amino-alcohols to oxo compounds. Allows this organism to utilize ethanolamine as the sole source of nitrogen and carbon in the presence of external vitamin B12. The polypeptide is Ethanolamine ammonia-lyase small subunit (Clostridium tetani (strain Massachusetts / E88)).